The primary structure comprises 858 residues: Bifunctional uridylyltransferase/uridylyl-removing enzyme (858 aa).

The tract at residues M1 to L324 is uridylyltransferase. Residues S325–L681 form a uridylyl-removing region. Residues V443–L565 form the HD domain. 2 consecutive ACT domains span residues Q682–S761 and I790–V858.

Belongs to the GlnD family. The cofactor is Mg(2+).

The enzyme catalyses [protein-PII]-L-tyrosine + UTP = [protein-PII]-uridylyl-L-tyrosine + diphosphate. It catalyses the reaction [protein-PII]-uridylyl-L-tyrosine + H2O = [protein-PII]-L-tyrosine + UMP + H(+). Its activity is regulated as follows. Uridylyltransferase (UTase) activity is inhibited by glutamine, while glutamine activates uridylyl-removing (UR) activity. In terms of biological role, modifies, by uridylylation and deuridylylation, the PII regulatory proteins (GlnB and homologs), in response to the nitrogen status of the cell that GlnD senses through the glutamine level. Under low glutamine levels, catalyzes the conversion of the PII proteins and UTP to PII-UMP and PPi, while under higher glutamine levels, GlnD hydrolyzes PII-UMP to PII and UMP (deuridylylation). Thus, controls uridylylation state and activity of the PII proteins, and plays an important role in the regulation of nitrogen assimilation and metabolism. This chain is Bifunctional uridylyltransferase/uridylyl-removing enzyme, found in Burkholderia mallei (strain NCTC 10247).